A 392-amino-acid polypeptide reads, in one-letter code: Chaperone protein DnaJ (392 aa).

Positions 5–75 constitute a J domain; it reads DYYEVLGIDK…QKKQQYDQFG (71 aa). The CR-type zinc-finger motif lies at 148 to 229; sequence GVEKTIKYKR…CHGTGTAKET (82 aa). 8 residues coordinate Zn(2+): Cys161, Cys164, Cys177, Cys180, Cys203, Cys206, Cys217, and Cys220. CXXCXGXG motif repeat units follow at residues 161 to 168, 177 to 184, 203 to 210, and 217 to 224; these read CENCHGTG, CPTCNGQG, CPDCHGTG, and CKHCHGTG.

This sequence belongs to the DnaJ family. In terms of assembly, homodimer. It depends on Zn(2+) as a cofactor.

The protein localises to the cytoplasm. Its function is as follows. Participates actively in the response to hyperosmotic and heat shock by preventing the aggregation of stress-denatured proteins and by disaggregating proteins, also in an autonomous, DnaK-independent fashion. Unfolded proteins bind initially to DnaJ; upon interaction with the DnaJ-bound protein, DnaK hydrolyzes its bound ATP, resulting in the formation of a stable complex. GrpE releases ADP from DnaK; ATP binding to DnaK triggers the release of the substrate protein, thus completing the reaction cycle. Several rounds of ATP-dependent interactions between DnaJ, DnaK and GrpE are required for fully efficient folding. Also involved, together with DnaK and GrpE, in the DNA replication of plasmids through activation of initiation proteins. This Fusobacterium nucleatum subsp. nucleatum (strain ATCC 25586 / DSM 15643 / BCRC 10681 / CIP 101130 / JCM 8532 / KCTC 2640 / LMG 13131 / VPI 4355) protein is Chaperone protein DnaJ.